The chain runs to 281 residues: MTTSVLVPSSLAREAEDRREATRKLGYVARAAAVYRVDRLTVYPDPDGAGKWEDGFVETVLRYAATPPHLRKEMWGKRDELEYVGVLPPLRVRSQTGSGSEGSGSLRQGIVTEVGADGRVRVNCGMQHPISLPVPADMDVEQGERVTVRVSSRRPVRAKLVDAPTTGFDVVAADLDAALSRDDAGLTIASSRYGEPVTSTRLGQLAERRDAEGGMTVAFGAPERGLPSILDVAPDAVGGDQTSDEPEGFDLWLNTVPNQGSEVVRTEEALFASLTCLTLTE.

This is an uncharacterized protein from Haloarcula marismortui (strain ATCC 43049 / DSM 3752 / JCM 8966 / VKM B-1809) (Halobacterium marismortui).